We begin with the raw amino-acid sequence, 112 residues long: Putative galactitol utilization operon repressor (112 aa).

The HTH deoR-type domain occupies serine 5–lysine 60. The H-T-H motif DNA-binding region spans valine 22 to aspartate 41.

Its function is as follows. Repressor of the gat operon for galacticol transport and metabolism. In K12 strains the operon is constitutively expressed because this gene is inactive. The protein is Putative galactitol utilization operon repressor (gatR) of Escherichia coli (strain K12).